The primary structure comprises 180 residues: Ribulose bisphosphate carboxylase small subunit, chloroplastic (180 aa).

The transit peptide at 1 to 57 directs the protein to the chloroplast; that stretch reads MASVVASAAVVTPFAASAASTTKSSQIVSVQAGLKAGVFGGKSEWQTKTQTNGSRVS.

It belongs to the RuBisCO small chain family. In terms of assembly, heterohexadecamer of 8 large and 8 small subunits.

Its subcellular location is the plastid. The protein localises to the chloroplast. RuBisCO catalyzes two reactions: the carboxylation of D-ribulose 1,5-bisphosphate, the primary event in carbon dioxide fixation, as well as the oxidative fragmentation of the pentose substrate. Both reactions occur simultaneously and in competition at the same active site. Although the small subunit is not catalytic it is essential for maximal activity. The sequence is that of Ribulose bisphosphate carboxylase small subunit, chloroplastic from Marchantia paleacea (Liverwort).